The following is a 196-amino-acid chain: Guanylate kinase (196 aa).

The Guanylate kinase-like domain occupies 8-191 (GRLIVLTGPT…AAADLWSVIA (184 aa)). 15 to 22 (GPTAVGKG) provides a ligand contact to ATP.

It belongs to the guanylate kinase family.

It is found in the cytoplasm. The enzyme catalyses GMP + ATP = GDP + ADP. In terms of biological role, essential for recycling GMP and indirectly, cGMP. The sequence is that of Guanylate kinase from Bifidobacterium longum (strain NCC 2705).